Here is a 229-residue protein sequence, read N- to C-terminus: MIKAIVTDIEGTTSDIRFVHSVLFPYARERLADTVRQHDSDPEIAQVLNALRQELAQPDADSDTLIAALNQFMDEDRKSTSLKLLQGIIWRAGYRNGDFQGHLYPEVAAQLAAWQQQGLHLYVYSSGSVEAQRLLFGYSNAGDLRPLFSDYFDTRVGAKRETDSYRTIAQAIGLPAEQLLFLSDIRQELDAAQEAGWHTCQLIRDDADSVSRHRQAARFDQIDLPEYAQ.

This sequence belongs to the HAD-like hydrolase superfamily. MasA/MtnC family. As to quaternary structure, monomer. Mg(2+) serves as cofactor.

The catalysed reaction is 5-methylsulfanyl-2,3-dioxopentyl phosphate + H2O = 1,2-dihydroxy-5-(methylsulfanyl)pent-1-en-3-one + phosphate. Its pathway is amino-acid biosynthesis; L-methionine biosynthesis via salvage pathway; L-methionine from S-methyl-5-thio-alpha-D-ribose 1-phosphate: step 3/6. The protein operates within amino-acid biosynthesis; L-methionine biosynthesis via salvage pathway; L-methionine from S-methyl-5-thio-alpha-D-ribose 1-phosphate: step 4/6. Functionally, bifunctional enzyme that catalyzes the enolization of 2,3-diketo-5-methylthiopentyl-1-phosphate (DK-MTP-1-P) into the intermediate 2-hydroxy-3-keto-5-methylthiopentenyl-1-phosphate (HK-MTPenyl-1-P), which is then dephosphorylated to form the acireductone 1,2-dihydroxy-3-keto-5-methylthiopentene (DHK-MTPene). In Pectobacterium atrosepticum (strain SCRI 1043 / ATCC BAA-672) (Erwinia carotovora subsp. atroseptica), this protein is Enolase-phosphatase E1.